A 435-amino-acid polypeptide reads, in one-letter code: Serine--tRNA ligase (435 aa).

Position 240–242 (Thr240–Glu242) interacts with L-serine. Residue Arg271–Glu273 participates in ATP binding. Residue Glu294 participates in L-serine binding. Glu358–Ser361 is an ATP binding site. Position 393 (Ser393) interacts with L-serine.

Belongs to the class-II aminoacyl-tRNA synthetase family. Type-1 seryl-tRNA synthetase subfamily. In terms of assembly, homodimer. The tRNA molecule binds across the dimer.

It is found in the cytoplasm. It carries out the reaction tRNA(Ser) + L-serine + ATP = L-seryl-tRNA(Ser) + AMP + diphosphate + H(+). It catalyses the reaction tRNA(Sec) + L-serine + ATP = L-seryl-tRNA(Sec) + AMP + diphosphate + H(+). The protein operates within aminoacyl-tRNA biosynthesis; selenocysteinyl-tRNA(Sec) biosynthesis; L-seryl-tRNA(Sec) from L-serine and tRNA(Sec): step 1/1. Catalyzes the attachment of serine to tRNA(Ser). Is also able to aminoacylate tRNA(Sec) with serine, to form the misacylated tRNA L-seryl-tRNA(Sec), which will be further converted into selenocysteinyl-tRNA(Sec). The chain is Serine--tRNA ligase from Cupriavidus metallidurans (strain ATCC 43123 / DSM 2839 / NBRC 102507 / CH34) (Ralstonia metallidurans).